Consider the following 165-residue polypeptide: 3-isopropylmalate dehydratase small subunit (165 aa).

This sequence belongs to the LeuD family. LeuD type 2 subfamily. Heterodimer of LeuC and LeuD.

It carries out the reaction (2R,3S)-3-isopropylmalate = (2S)-2-isopropylmalate. It participates in amino-acid biosynthesis; L-leucine biosynthesis; L-leucine from 3-methyl-2-oxobutanoate: step 2/4. Catalyzes the isomerization between 2-isopropylmalate and 3-isopropylmalate, via the formation of 2-isopropylmaleate. The chain is 3-isopropylmalate dehydratase small subunit from Saccharolobus islandicus (strain Y.N.15.51 / Yellowstone #2) (Sulfolobus islandicus).